The sequence spans 282 residues: MDPSSSSRARSMPPPVPMEGLQEAGPSPFLTKTFEMVGDPNTNHIVSWNRGGISFVVWDPHSFSATILPLYFKHNNFSSFVRQLNTYGFRKIEAERWEFMNEGFLMGQRDLLKSIKRRTSSSSPPSLNYSQSQPEAHDPGVELPQLREERHVLMMEISTLRQEEQRARGYVQAMEQRINGAEKKQRHMMSFLRRAVENPSLLQQIFEQKRDREEAAMIDQAGLIKMEEVEHLSELEALALEMQGYGRQRTDGVERELDDGFWEELLMNNENSDEEEANVKQD.

Composition is skewed to low complexity over residues 1-11 (MDPSSSSRARS) and 120-134 (SSSS…QSQP). Disordered regions lie at residues 1–24 (MDPS…LQEA) and 117–139 (RRTS…AHDP). The DNA-binding element occupies 26-120 (PSPFLTKTFE…LLKSIKRRTS (95 aa)). Residues 137-196 (HDPGVELPQLREERHVLMMEISTLRQEEQRARGYVQAMEQRINGAEKKQRHMMSFLRRAV) are hydrophobic repeat HR-A/B. The short motif at 208 to 212 (QKRDR) is the Nuclear localization signal element. The short motif at 232-240 (LSELEALAL) is the Nuclear export signal element. The AHA signature appears at 259–268 (DGFWEELLMN).

The protein belongs to the HSF family. Class A subfamily. In terms of assembly, homotrimer. In terms of processing, exhibits temperature-dependent phosphorylation.

It localises to the cytoplasm. The protein localises to the nucleus. In terms of biological role, transcriptional activator that specifically binds DNA sequence 5'-AGAAnnTTCT-3' known as heat shock promoter elements (HSE). The sequence is that of Heat stress transcription factor A-7b (HSFA7B) from Arabidopsis thaliana (Mouse-ear cress).